The sequence spans 240 residues: UDP-2,3-diacylglucosamine hydrolase (240 aa).

The Mn(2+) site is built by D8, H10, D41, N79, and H114. 79–80 provides a ligand contact to substrate; sequence NR. The substrate site is built by D122, S160, N164, K167, and H195. Mn(2+) contacts are provided by H195 and H197.

This sequence belongs to the LpxH family. Requires Mn(2+) as cofactor.

It is found in the cell inner membrane. It carries out the reaction UDP-2-N,3-O-bis[(3R)-3-hydroxytetradecanoyl]-alpha-D-glucosamine + H2O = 2-N,3-O-bis[(3R)-3-hydroxytetradecanoyl]-alpha-D-glucosaminyl 1-phosphate + UMP + 2 H(+). It functions in the pathway glycolipid biosynthesis; lipid IV(A) biosynthesis; lipid IV(A) from (3R)-3-hydroxytetradecanoyl-[acyl-carrier-protein] and UDP-N-acetyl-alpha-D-glucosamine: step 4/6. Hydrolyzes the pyrophosphate bond of UDP-2,3-diacylglucosamine to yield 2,3-diacylglucosamine 1-phosphate (lipid X) and UMP by catalyzing the attack of water at the alpha-P atom. Involved in the biosynthesis of lipid A, a phosphorylated glycolipid that anchors the lipopolysaccharide to the outer membrane of the cell. The protein is UDP-2,3-diacylglucosamine hydrolase of Escherichia coli O81 (strain ED1a).